The primary structure comprises 461 residues: Homocitrate synthase (461 aa).

Residues 4–259 enclose the Pyruvate carboxyltransferase domain; it reads VGILDSTLRE…IEVVKLDKLQ (256 aa). R12 serves as a coordination point for 2-oxoglutarate. Residue E13 coordinates Mg(2+). Residues H76, R136, and T170 each coordinate 2-oxoglutarate. Mg(2+)-binding residues include H198 and H200. H292 (proton acceptor) is an active-site residue.

Belongs to the alpha-IPM synthase/homocitrate synthase family. Homocitrate synthase LYS20/LYS21 subfamily. Mg(2+) is required as a cofactor. It depends on Mn(2+) as a cofactor.

The enzyme catalyses acetyl-CoA + 2-oxoglutarate + H2O = (2R)-homocitrate + CoA + H(+). Its pathway is amino-acid biosynthesis; L-lysine biosynthesis via AAA pathway; L-alpha-aminoadipate from 2-oxoglutarate: step 1/5. Its function is as follows. Catalyzes the aldol-type condensation of 2-oxoglutarate with acetyl-CoA to yield homocitrate. Carries out the first step of the alpha-aminoadipate (AAA) lysine biosynthesis pathway. The protein is Homocitrate synthase of Saccharolobus solfataricus (strain ATCC 35092 / DSM 1617 / JCM 11322 / P2) (Sulfolobus solfataricus).